The sequence spans 417 residues: L-rhamnose isomerase (417 aa).

Positions 261, 293, and 295 each coordinate Mn(2+).

This sequence belongs to the rhamnose isomerase family. The cofactor is Mn(2+).

It localises to the cytoplasm. It catalyses the reaction L-rhamnopyranose = L-rhamnulose. It functions in the pathway carbohydrate degradation; L-rhamnose degradation; glycerone phosphate from L-rhamnose: step 1/3. In terms of biological role, catalyzes the interconversion of L-rhamnose and L-rhamnulose. The sequence is that of L-rhamnose isomerase from Oceanobacillus iheyensis (strain DSM 14371 / CIP 107618 / JCM 11309 / KCTC 3954 / HTE831).